A 583-amino-acid chain; its full sequence is Long-chain-fatty-acid--AMP ligase FadD26 (583 aa).

The protein belongs to the ATP-dependent AMP-binding enzyme family.

The enzyme catalyses holo-[(phenol)carboxyphthiodiolenone synthase] + a long-chain fatty acid + ATP = a long-chain fatty acyl-[(phenol)carboxyphthiodiolenone synthase] + AMP + diphosphate. It carries out the reaction eicosanoate + holo-[(phenol)carboxyphthiodiolenone synthase] + ATP = icosanoyl-[(phenol)carboxyphthiodiolenone synthase] + AMP + diphosphate. It catalyses the reaction holo-[(phenol)carboxyphthiodiolenone synthase] + docosanoate + ATP = docosanoyl-[(phenol)carboxyphthiodiolenone synthase] + AMP + diphosphate. It participates in lipid metabolism; fatty acid biosynthesis. In terms of biological role, catalyzes the activation of long-chain fatty acids as acyl-adenylates (acyl-AMP), which are then transferred to the multifunctional polyketide synthase PpsA for further chain extension. Catalyzes the adenylation of the long-chain fatty acids eicosanoate (C20) or docosanoate (C22), and potentially the very-long-chain fatty acid lignocerate (C24). Involved in the biosynthesis of phthiocerol dimycocerosate (DIM A) and phthiodiolone dimycocerosate (DIM B). This is Long-chain-fatty-acid--AMP ligase FadD26 (fadD26) from Mycobacterium tuberculosis (strain CDC 1551 / Oshkosh).